The sequence spans 457 residues: MDTQPQSNHPSVISAQLTPYDALDLAFTFEDRHQHEWWKRAGPVLGLTMRHARYDLNKQYQYLAFFARQIIPLLGPFPESAGSDYQRGFIPLEVSQNFQQSGTTVRLCFEPRTYSGYAIAKDPFGDLLVQEVVAKLGQVRGVKVDLQMFRQLASILNLTKDEEEELYQPACYENLPPTFKIQNIVGIQLPRSGNITLKADWFLSAKSLVSTIPITELSFEAIRTVDQGKNLFTPGLRPIEEYFRSMEMQPASPSHPRTTEFNAIACHLDDSTNARLKIYLSERLLKFDRVADIWTLGGRLKNCPGISQGLELVRALWSILQIKEGHHFPLAVNSLMMKGGDPASLAAAEKEDYPETQFFDEQFLVLNFEIRPGDPWPQPKIYFLLTELADNKVADAVVALFNRLGWVEEASRYKENLAAYYPHRDLDKTSGLQRFLSFSYSAKNGPYTSVYHWGIGG.

Dimethylallyl diphosphate is bound by residues Arg106, Lys198, Lys277, Tyr279, Tyr382, Tyr447, and Tyr451.

This sequence belongs to the tryptophan dimethylallyltransferase family.

It participates in secondary metabolite biosynthesis. Nonribosomal peptide synthetase that mediates the biosynthesis of usterphenyllins and uscandidusins, p-terphenyl derivatives. Within the pathway, ucdE prenylates position C-5 of ring A of 3,15-dihydroxyterphenyllin to produce forms usterphenyllin B. UcdE further prenylates position C-14 of ring C of usterphenyllin B to form usterphenyllin A. The pathway begin with the biosynthesis of 4-hydroxyphenylpyruvate (HPPA) from L-tyrosine, possibly by the aminotransferase ucdG. The nonribosomal peptide synthetase ucdA then condenses two HPPA units to produce atromentin. The key step in this pathway is the reduction and dehydration of atromentin to form a terphenyl triol intermediate, performed by the NAD-dependent dehydrogenase ucdB. Further O-methylation by the methyltransferase ucdC forms terphenyllin carrying two methoxy moieties at C-9 and C-12, and subsequent dihydroxylation at C-3 of ring A and C-15 of ring C by the flavin-dependent oxygenase ucdD leads to 3,15-dihydroxyterphenyllin. Prenylation by ucdE at position C-5 of ring A forms usterphenyllin B, and is followed by a second prenylation at position C-14 of ring C to form usterphenyllin A. The following furan ring formation that leads to uscandidusins A and B was proven to be an unexpected spontaneous non-enzymatic reaction. The polypeptide is Prenyltransferase ucdE (Aspergillus ustus).